We begin with the raw amino-acid sequence, 544 residues long: Exodeoxyribonuclease 7 large subunit (544 aa).

Residues 522 to 544 (PETPPKSRKADNPPEPPEQTSFL) form a disordered region.

Belongs to the XseA family. As to quaternary structure, heterooligomer composed of large and small subunits.

It localises to the cytoplasm. The catalysed reaction is Exonucleolytic cleavage in either 5'- to 3'- or 3'- to 5'-direction to yield nucleoside 5'-phosphates.. Functionally, bidirectionally degrades single-stranded DNA into large acid-insoluble oligonucleotides, which are then degraded further into small acid-soluble oligonucleotides. The chain is Exodeoxyribonuclease 7 large subunit from Zymomonas mobilis subsp. mobilis (strain ATCC 31821 / ZM4 / CP4).